The sequence spans 322 residues: Ferric-anguibactin-binding protein FatB (322 aa).

An N-terminal signal peptide occupies residues 1 to 22; sequence MFKSTLNIAVAIVCSSLVTLTG. The N-palmitoyl cysteine moiety is linked to residue cysteine 23. Cysteine 23 carries S-diacylglycerol cysteine lipidation. Residues 57–322 form the Fe/B12 periplasmic-binding domain; that stretch reads RVAALDMNEV…IDDIIKGYQS (266 aa).

Belongs to the bacterial solute-binding protein 8 family. Part of an iron transport system composed of the outer membrane receptor FatA, the periplasmic binding protein FatB and the inner membrane proteins FatC and FatD.

Its subcellular location is the cell inner membrane. Functionally, involved in the uptake of iron in complex with the siderophore anguibactin. Binds ferric-anguibactin in the periplasm and mediates its transport into the cytoplasm. The polypeptide is Ferric-anguibactin-binding protein FatB (Vibrio anguillarum (strain ATCC 68554 / 775) (Listonella anguillarum)).